A 337-amino-acid chain; its full sequence is Phosphate acyltransferase (337 aa).

This sequence belongs to the PlsX family. As to quaternary structure, homodimer. Probably interacts with PlsY.

The protein localises to the cytoplasm. The enzyme catalyses a fatty acyl-[ACP] + phosphate = an acyl phosphate + holo-[ACP]. Its pathway is lipid metabolism; phospholipid metabolism. In terms of biological role, catalyzes the reversible formation of acyl-phosphate (acyl-PO(4)) from acyl-[acyl-carrier-protein] (acyl-ACP). This enzyme utilizes acyl-ACP as fatty acyl donor, but not acyl-CoA. The protein is Phosphate acyltransferase of Listeria monocytogenes serotype 4b (strain F2365).